Consider the following 662-residue polypeptide: UvrABC system protein B (662 aa).

The Helicase ATP-binding domain occupies 25–182; that stretch reads KGIEKGEKFQ…KKLVEIQYER (158 aa). 38–45 provides a ligand contact to ATP; the sequence is GVTGSGKT. Residues 91-114 carry the Beta-hairpin motif; sequence YYDYYQPEAYVAQSDTYIEKDASI. The Helicase C-terminal domain occupies 429–595; sequence QIDDLYTSIQ…TIIKDIREVI (167 aa). In terms of domain architecture, UVR spans 622-657; that stretch reads DKLIEKYEEEMREAAQNLQFEKAAHLRDVIYKLKRD.

Belongs to the UvrB family. In terms of assembly, forms a heterotetramer with UvrA during the search for lesions. Interacts with UvrC in an incision complex.

It is found in the cytoplasm. Its function is as follows. The UvrABC repair system catalyzes the recognition and processing of DNA lesions. A damage recognition complex composed of 2 UvrA and 2 UvrB subunits scans DNA for abnormalities. Upon binding of the UvrA(2)B(2) complex to a putative damaged site, the DNA wraps around one UvrB monomer. DNA wrap is dependent on ATP binding by UvrB and probably causes local melting of the DNA helix, facilitating insertion of UvrB beta-hairpin between the DNA strands. Then UvrB probes one DNA strand for the presence of a lesion. If a lesion is found the UvrA subunits dissociate and the UvrB-DNA preincision complex is formed. This complex is subsequently bound by UvrC and the second UvrB is released. If no lesion is found, the DNA wraps around the other UvrB subunit that will check the other stand for damage. This Clostridium botulinum (strain 657 / Type Ba4) protein is UvrABC system protein B.